We begin with the raw amino-acid sequence, 278 residues long: Putative transposase for insertion sequence element IS986/IS6110 (278 aa).

Residues 101 to 268 (GPPAPNRLWV…VPPVELEAAY (168 aa)) form the Integrase catalytic domain.

Its function is as follows. Involved in the transposition of the insertion sequence. The polypeptide is Putative transposase for insertion sequence element IS986/IS6110 (Mycobacterium tuberculosis (strain CDC 1551 / Oshkosh)).